The chain runs to 199 residues: Acireductone dioxygenase 3 (199 aa).

The Fe(2+) site is built by H99, H101, E105, and H144. 4 residues coordinate Ni(2+): H99, H101, E105, and H144.

It belongs to the acireductone dioxygenase (ARD) family. The cofactor is Fe(2+). Ni(2+) is required as a cofactor.

The protein resides in the cytoplasm. It is found in the nucleus. It carries out the reaction 1,2-dihydroxy-5-(methylsulfanyl)pent-1-en-3-one + O2 = 4-methylsulfanyl-2-oxobutanoate + formate + 2 H(+). It catalyses the reaction 1,2-dihydroxy-5-(methylsulfanyl)pent-1-en-3-one + O2 = 3-(methylsulfanyl)propanoate + CO + formate + 2 H(+). Its pathway is amino-acid biosynthesis; L-methionine biosynthesis via salvage pathway; L-methionine from S-methyl-5-thio-alpha-D-ribose 1-phosphate: step 5/6. Its function is as follows. Catalyzes 2 different reactions between oxygen and the acireductone 1,2-dihydroxy-3-keto-5-methylthiopentene (DHK-MTPene) depending upon the metal bound in the active site. Fe-containing acireductone dioxygenase (Fe-ARD) produces formate and 2-keto-4-methylthiobutyrate (KMTB), the alpha-ketoacid precursor of methionine in the methionine recycle pathway. Ni-containing acireductone dioxygenase (Ni-ARD) produces methylthiopropionate, carbon monoxide and formate, and does not lie on the methionine recycle pathway. This chain is Acireductone dioxygenase 3 (ARD3), found in Arabidopsis thaliana (Mouse-ear cress).